The chain runs to 148 residues: Large ribosomal subunit protein uL15 (148 aa).

Basic residues predominate over residues 1 to 30 (MPSRLRKTRKLRGHVSHGHGRIGKHRKHPG). The segment at 1–37 (MPSRLRKTRKLRGHVSHGHGRIGKHRKHPGGRGNAGG) is disordered. H39 carries the (3S)-3-hydroxyhistidine modification. N6-acetyllysine occurs at positions 47 and 55. S68 carries the post-translational modification Phosphoserine. K110 carries the N6-acetyllysine modification.

This sequence belongs to the universal ribosomal protein uL15 family. In terms of assembly, component of the large ribosomal subunit. Hydroxylated on His-39 by MINA.

It is found in the cytoplasm. In terms of biological role, component of the large ribosomal subunit. The ribosome is a large ribonucleoprotein complex responsible for the synthesis of proteins in the cell. This chain is Large ribosomal subunit protein uL15 (Rpl27a), found in Mus musculus (Mouse).